The chain runs to 2696 residues: Histone-lysine N-methyltransferase, H3 lysine-36 specific (2696 aa).

A Phosphoserine modification is found at Ser117. Disordered regions lie at residues 207 to 252 (MGSE…EKAA) and 281 to 311 (DPDSSTSTLGNMLELPGTSSSSTSQELPFCQ). Over residues 236-248 (QKNKQRNEVDGSN) the composition is skewed to basic and acidic residues. Polar residues-rich tracts occupy residues 281–290 (DPDSSTSTLG) and 297–306 (GTSSSSTSQE). Residues 323-388 (VGDLIWAKFK…AGKAIVMFEG (66 aa)) enclose the PWWP 1 domain. Ser483 and Ser486 each carry phosphoserine. Positions 487–514 (ADEKEKPCAKSRARKSSDNPKRTSVKKG) are disordered. Ser766 carries the phosphoserine modification. Residues 872–891 (LGEDVSDSGTSKPSKPLLFS) are disordered. A Glycyl lysine isopeptide (Lys-Gly) (interchain with G-Cter in SUMO2) cross-link involves residue Lys906. Disordered stretches follow at residues 936–1035 (YRSP…DAFS), 1067–1093 (VLQGDRERGGSLRGGAEDPSKEDPLQI), 1112–1134 (SKVKQSDPGKISEKGLSFENGKG), 1243–1272 (SIGDMEKEPGIPSLTPQAELPEPAVRSEKK), 1294–1344 (PKKK…EPPV), 1382–1428 (SPRP…KKGD), and 1480–1534 (KMQC…MQGE). The span at 948–961 (SPVGVSKVLVSGGS) shows a compositional bias: low complexity. Residues 971–982 (GTQNSANPSPSG) are compositionally biased toward polar residues. Basic and acidic residues-rich tracts occupy residues 1000 to 1017 (SDKRDLPASGKSRSDCVT), 1070 to 1090 (GDRERGGSLRGGAEDPSKEDP), and 1112 to 1124 (SKVKQSDPGKISE). Over residues 1300-1314 (KVQEQVHKVSSRCEE) the composition is skewed to basic and acidic residues. Positions 1323–1337 (SSAQNKQVDENSLIS) are enriched in polar residues. Lys1339 participates in a covalent cross-link: Glycyl lysine isopeptide (Lys-Gly) (interchain with G-Cter in SUMO2). At Ser1510 the chain carries Phosphoserine. Over residues 1513–1523 (ETVEEGVEHDP) the composition is skewed to basic and acidic residues. PHD-type zinc fingers lie at residues 1543 to 1589 (ENVC…CRTG), 1590 to 1646 (IHTC…CHAA), and 1707 to 1751 (VSWC…CKAG). Residues 1756–1818 (YREIVWVKVG…QARVFPYMEG (63 aa)) enclose the PWWP 2 domain. The 51-residue stretch at 1890–1940 (SEIPRCNCKATDENPCGIDSECINRMLLYECHPTVCPAGGRCQNQCFSKRQ) folds into the AWS domain. The 118-residue stretch at 1942–2059 (PEVEIFRTLQ…AGTELTFNYN (118 aa)) folds into the SET domain. S-adenosyl-L-methionine contacts are provided by residues 1952-1954 (RGW), 1994-1997 (TNFY), 2020-2021 (NH), Asn2065, and Lys2071. The inhibits enzyme activity in the absence of bound histone stretch occupies residues 2060-2066 (LECLGNG). One can recognise a Post-SET domain in the interval 2066-2082 (GKTVCKCGAPNCSGFLG). The disordered stretch occupies residues 2091–2111 (ATEEKSKKFKKKQQGKRRTQG). Over residues 2097–2108 (KKFKKKQQGKRR) the composition is skewed to basic residues. The PHD-type 4; atypical zinc-finger motif lies at 2118-2165 (EDECFSCGDAGQLVSCKKPGCPKVYHADCLNLTKRPAGKWECPWHQCD). The disordered stretch occupies residues 2213-2422 (LEPGEIREYV…SLSQRLPPPE (210 aa)). A compositionally biased stretch (pro residues) spans 2222 to 2232 (VPPPVPLPPGP). Residues 2281 to 2298 (RPLERTDSRPQPLDKVRD) are compositionally biased toward basic and acidic residues. Residues 2303–2314 (GTKSQSLVSSQR) are compositionally biased toward polar residues. Over residues 2330–2348 (SDKPSPVTSPSSSPSVRSQ) the composition is skewed to low complexity. At Ser2369 the chain carries Phosphoserine. Composition is skewed to polar residues over residues 2371–2381 (RPQSLEKTSVP) and 2394–2404 (ITSSPKPQTSD). At Thr2462 the chain carries Phosphothreonine. Disordered stretches follow at residues 2464–2499 (RQKERAASPHQVTPQADEKMPVLESSSWPASKGLGH), 2553–2575 (TQASGRASAGAEQTPGPLSQSPG), 2595–2616 (KSGQSFRSLGKAPASLPTEEKK), and 2665–2696 (LGRGQDPKPEQNTLPALNQAPSSHKCAESEQK). Residue Ser2471 is modified to Phosphoserine. Lys2616 participates in a covalent cross-link: Glycyl lysine isopeptide (Lys-Gly) (interchain with G-Cter in SUMO2). Polar residues predominate over residues 2674-2686 (EQNTLPALNQAPS).

Belongs to the class V-like SAM-binding methyltransferase superfamily. In terms of assembly, interacts with the ligand-binding domains of RARA and THRA in the absence of ligand; in the presence of ligand the interaction is severely disrupted but some binding still occurs. Interacts with the ligand-binding domains of RXRA and ESRRA only in the presence of ligand. Interacts with ZNF496. Interacts with AR DNA- and ligand-binding domains. As to expression, expressed in the fetal/adult brain, kidney, skeletal muscle, spleen, and the thymus, and faintly in the lung.

It is found in the nucleus. The protein localises to the chromosome. The catalysed reaction is L-lysyl(36)-[histone H3] + 2 S-adenosyl-L-methionine = N(6),N(6)-dimethyl-L-lysyl(36)-[histone H3] + 2 S-adenosyl-L-homocysteine + 2 H(+). Its function is as follows. Histone methyltransferase that dimethylates Lys-36 of histone H3 (H3K36me2). Transcriptional intermediary factor capable of both negatively or positively influencing transcription, depending on the cellular context. This chain is Histone-lysine N-methyltransferase, H3 lysine-36 specific (NSD1), found in Homo sapiens (Human).